The primary structure comprises 1072 residues: Carbamoyl phosphate synthase large chain (1072 aa).

Positions 1–401 (MPKRLDINTI…SLLKAVRSLE (401 aa)) are carboxyphosphate synthetic domain. Arg-129, Arg-169, Gly-175, Gly-176, Lys-208, Ile-210, Glu-215, Gly-241, Val-242, His-243, Gln-284, and Glu-298 together coordinate ATP. Residues 133–327 (RTLMQDLNEP…IAKLAAKIAV (195 aa)) enclose the ATP-grasp 1 domain. Mg(2+)-binding residues include Gln-284, Glu-298, and Asn-300. Residues Gln-284, Glu-298, and Asn-300 each contribute to the Mn(2+) site. The segment at 402-546 (LGIYHLELDH…YSTYAEENES (145 aa)) is oligomerization domain. Residues 547–929 (IVTDRKSVVV…ALYKGLVASG (383 aa)) form a carbamoyl phosphate synthetic domain region. Residues 671–861 (EAALTKLGIP…MANVATKVIL (191 aa)) form the ATP-grasp 2 domain. Residues Arg-707, Arg-746, Glu-752, Gly-777, Val-778, His-779, Ser-780, Gln-820, and Glu-832 each contribute to the ATP site. 3 residues coordinate Mg(2+): Gln-820, Glu-832, and Asn-834. Mn(2+)-binding residues include Gln-820, Glu-832, and Asn-834. The 143-residue stretch at 930–1072 (INIPTHGSVI…QTKRHEVVHA (143 aa)) folds into the MGS-like domain. The allosteric domain stretch occupies residues 930–1072 (INIPTHGSVI…QTKRHEVVHA (143 aa)).

Belongs to the CarB family. As to quaternary structure, composed of two chains; the small (or glutamine) chain promotes the hydrolysis of glutamine to ammonia, which is used by the large (or ammonia) chain to synthesize carbamoyl phosphate. Tetramer of heterodimers (alpha,beta)4. Mg(2+) serves as cofactor. It depends on Mn(2+) as a cofactor.

It catalyses the reaction hydrogencarbonate + L-glutamine + 2 ATP + H2O = carbamoyl phosphate + L-glutamate + 2 ADP + phosphate + 2 H(+). The enzyme catalyses hydrogencarbonate + NH4(+) + 2 ATP = carbamoyl phosphate + 2 ADP + phosphate + 2 H(+). The protein operates within amino-acid biosynthesis; L-arginine biosynthesis; carbamoyl phosphate from bicarbonate: step 1/1. Its pathway is pyrimidine metabolism; UMP biosynthesis via de novo pathway; (S)-dihydroorotate from bicarbonate: step 1/3. Large subunit of the glutamine-dependent carbamoyl phosphate synthetase (CPSase). CPSase catalyzes the formation of carbamoyl phosphate from the ammonia moiety of glutamine, carbonate, and phosphate donated by ATP, constituting the first step of 2 biosynthetic pathways, one leading to arginine and/or urea and the other to pyrimidine nucleotides. The large subunit (synthetase) binds the substrates ammonia (free or transferred from glutamine from the small subunit), hydrogencarbonate and ATP and carries out an ATP-coupled ligase reaction, activating hydrogencarbonate by forming carboxy phosphate which reacts with ammonia to form carbamoyl phosphate. The chain is Carbamoyl phosphate synthase large chain from Bacillus cereus (strain ATCC 10987 / NRS 248).